Consider the following 126-residue polypeptide: Large ribosomal subunit protein bL17 (126 aa).

It belongs to the bacterial ribosomal protein bL17 family. Part of the 50S ribosomal subunit. Contacts protein L32.

The polypeptide is Large ribosomal subunit protein bL17 (Rickettsia felis (strain ATCC VR-1525 / URRWXCal2) (Rickettsia azadi)).